Here is an 84-residue protein sequence, read N- to C-terminus: Gomesin (84 aa).

The N-terminal stretch at 1 to 23 (MNRTRLFACLLLAVLILVHESNA) is a signal peptide. A Pyrrolidone carboxylic acid modification is found at Gln24. Intrachain disulfides connect Cys25-Cys38 and Cys29-Cys34. At Arg41 the chain carries Arginine amide. A propeptide spanning residues 42 to 84 (GKRSLDETNVGTSDVEKRAFDDSNVPSLVEERELEDEGSFIFD) is cleaved from the precursor.

As to expression, in hemocytes only, but not in all hemocytes observed.

The protein localises to the secreted. Its function is as follows. Active against several Gram-positive bacteria such as Bacillus spp, Staphylococcus spp and E.faecalis, several Gram-negative bacteria such as E.coli, K.pneumoniae, P.aeruginosa and Salmonella spp, filamentous fungi such as N.crassa, T.viridae and yeasts such as C.albicans. It is active against the parasite L.amazonensis as well. It shows hemolytic activity. The chain is Gomesin from Acanthoscurria gomesiana (Tarantula spider).